Here is a 328-residue protein sequence, read N- to C-terminus: Malate dehydrogenase (328 aa).

16–22 (GAAGQIS) contacts NAD(+). Substrate is bound by residues R97 and R103. NAD(+) contacts are provided by residues N110, Q117, and 134 to 136 (VGN). N136 and R167 together coordinate substrate. H192 (proton acceptor) is an active-site residue.

It belongs to the LDH/MDH superfamily. MDH type 2 family. In terms of assembly, homotetramer.

The catalysed reaction is (S)-malate + NAD(+) = oxaloacetate + NADH + H(+). Citrate activates the enzyme in the oxidation of malate to oxaloacetate and inhibits it in the reverse reaction. In terms of biological role, catalyzes the reversible oxidation of malate to oxaloacetate. Exhibits higher catalytic efficiency for oxaloacetate reduction than for malate oxidation in vitro. Almost equally active both for NADH and NADPH on the bases of the kcat values at pH 6.5, but catalytic efficiency for oxaloacetate reduction is 50-fold higher with NADH. This is Malate dehydrogenase from Corynebacterium glutamicum (strain ATCC 13032 / DSM 20300 / JCM 1318 / BCRC 11384 / CCUG 27702 / LMG 3730 / NBRC 12168 / NCIMB 10025 / NRRL B-2784 / 534).